Consider the following 99-residue polypeptide: Nucleoid-associated protein EbfC (99 aa).

The protein belongs to the YbaB/EbfC family. Homodimer.

It is found in the cytoplasm. It localises to the nucleoid. Binds to DNA and alters its conformation. May be involved in regulation of gene expression, nucleoid organization and DNA protection. The chain is Nucleoid-associated protein EbfC from Borrelia turicatae (strain 91E135).